Consider the following 529-residue polypeptide: Peptide chain release factor 3 (529 aa).

A tr-type G domain is found at 11-280 (AKRRTFAIIS…GLVEWAPAPM (270 aa)). Residues 20-27 (SHPDAGKT), 88-92 (DTPGH), and 142-145 (NKLD) each bind GTP.

The protein belongs to the TRAFAC class translation factor GTPase superfamily. Classic translation factor GTPase family. PrfC subfamily.

Its subcellular location is the cytoplasm. Functionally, increases the formation of ribosomal termination complexes and stimulates activities of RF-1 and RF-2. It binds guanine nucleotides and has strong preference for UGA stop codons. It may interact directly with the ribosome. The stimulation of RF-1 and RF-2 is significantly reduced by GTP and GDP, but not by GMP. In Citrobacter koseri (strain ATCC BAA-895 / CDC 4225-83 / SGSC4696), this protein is Peptide chain release factor 3.